A 552-amino-acid chain; its full sequence is Small ribosomal subunit protein bS1 (552 aa).

S1 motif domains lie at 31 to 101 (TIKE…ISQQ), 116 to 179 (NAII…ISRK), 200 to 268 (TEPV…LSIK), 285 to 355 (GYAI…VSLK), 372 to 440 (GDIV…LSAK), and 457 to 521 (DSVI…ASVH).

This sequence belongs to the bacterial ribosomal protein bS1 family.

In terms of biological role, binds mRNA; thus facilitating recognition of the initiation point. It is needed to translate mRNA with a short Shine-Dalgarno (SD) purine-rich sequence. This chain is Small ribosomal subunit protein bS1 (rpsA), found in Helicobacter pylori (strain J99 / ATCC 700824) (Campylobacter pylori J99).